The chain runs to 232 residues: Octanoyltransferase (232 aa).

The BPL/LPL catalytic domain occupies 40-226 (GSAPERVWLL…TWQDLFGSVP (187 aa)). Substrate-binding positions include 79-86 (RGGQWTYH), 157-159 (ALG), and 170-172 (GVA). The active-site Acyl-thioester intermediate is Cys-188.

Belongs to the LipB family.

Its subcellular location is the cytoplasm. The catalysed reaction is octanoyl-[ACP] + L-lysyl-[protein] = N(6)-octanoyl-L-lysyl-[protein] + holo-[ACP] + H(+). Its pathway is protein modification; protein lipoylation via endogenous pathway; protein N(6)-(lipoyl)lysine from octanoyl-[acyl-carrier-protein]: step 1/2. Functionally, catalyzes the transfer of endogenously produced octanoic acid from octanoyl-acyl-carrier-protein onto the lipoyl domains of lipoate-dependent enzymes. Lipoyl-ACP can also act as a substrate although octanoyl-ACP is likely to be the physiological substrate. The protein is Octanoyltransferase of Gluconacetobacter diazotrophicus (strain ATCC 49037 / DSM 5601 / CCUG 37298 / CIP 103539 / LMG 7603 / PAl5).